The chain runs to 426 residues: MAAIEAVGAREILDSRGNPTVEVEVLLEDGTVSRAAVPSGASTGAFEAYELRDGDKGRYLGKGVEKAVDAVLDEIGPAIEGFEASDQRIVDEAMIELDGTDNKKRLGANAMLGVSLAVAKAAADSADLPLFRYLGGPNAHVLPVPMMNIINGGAHADTGVDIQEFMILPIGAETFSEGLRWGVETYHSLKALLKSKGLNTGLGDEGGFAPELEHNRAALDLIAEAIEKAGFTVGSQIALGLDVASTEFFENGVYRFEGQDRTAAEMSAYYTDLANNYPLVSIEDPLAEDDWEGWAHLNAEIGSTLQLVGDDLFVTNPKRLAQGIQQKAANSILVKVNQIGTLTETLDAVSLAQRSGMTAVLSHRSGETEDTTIADLAVATDSGQIKTGAPARSERVAKYNQLLRIEEELGEAAVYAGRSAFPRYQG.

Gln-163 is a (2R)-2-phosphoglycerate binding site. The active-site Proton donor is the Glu-205. Residues Asp-242, Glu-283, and Asp-310 each coordinate Mg(2+). Positions 335, 364, 365, and 386 each coordinate (2R)-2-phosphoglycerate. The active-site Proton acceptor is Lys-335.

This sequence belongs to the enolase family. Requires Mg(2+) as cofactor.

Its subcellular location is the cytoplasm. It is found in the secreted. The protein resides in the cell surface. The enzyme catalyses (2R)-2-phosphoglycerate = phosphoenolpyruvate + H2O. It participates in carbohydrate degradation; glycolysis; pyruvate from D-glyceraldehyde 3-phosphate: step 4/5. Functionally, catalyzes the reversible conversion of 2-phosphoglycerate (2-PG) into phosphoenolpyruvate (PEP). It is essential for the degradation of carbohydrates via glycolysis. The chain is Enolase from Leifsonia xyli subsp. xyli (strain CTCB07).